We begin with the raw amino-acid sequence, 104 residues long: UPF0235 protein RBE_0633 (104 aa).

This sequence belongs to the UPF0235 family.

This Rickettsia bellii (strain RML369-C) protein is UPF0235 protein RBE_0633.